The primary structure comprises 329 residues: Quinone oxidoreductase (329 aa).

The residue at position 2 (A2) is an N-acetylalanine. K23 is modified (N6-acetyllysine). Residues Y53, 158-161, G181, H200, N229, 246-249, and 269-271 each bind NADP(+); these read SGGV, VGCR, and VSL. An N6-succinyllysine modification is found at K296.

It belongs to the zinc-containing alcohol dehydrogenase family. Quinone oxidoreductase subfamily. Homotetramer.

It localises to the cytoplasm. It catalyses the reaction 2 a quinone + NADPH + H(+) = 2 a 1,4-benzosemiquinone + NADP(+). Its function is as follows. Does not have alcohol dehydrogenase activity. Binds NADP and acts through a one-electron transfer process. Orthoquinones, such as 1,2-naphthoquinone or 9,10-phenanthrenequinone, are the best substrates (in vitro). May act in the detoxification of xenobiotics. Interacts with (AU)-rich elements (ARE) in the 3'-UTR of target mRNA species and enhances their stability. NADPH binding interferes with mRNA binding. In Rattus norvegicus (Rat), this protein is Quinone oxidoreductase (Cryz).